The following is a 127-amino-acid chain: Major sperm protein 33 (127 aa).

Ala-2 carries the post-translational modification N-acetylalanine. The 118-residue stretch at 9-126 folds into the MSP domain; that stretch reads DIQTQPGTKI…RRKNLPIEYN (118 aa).

Sperm.

The protein resides in the cell projection. Its subcellular location is the pseudopodium. The protein localises to the cytoplasm. It is found in the cytoskeleton. Functionally, central component in molecular interactions underlying sperm crawling. Forms an extensive filament system that extends from sperm villipoda, along the leading edge of the pseudopod. The polypeptide is Major sperm protein 33 (msp-33) (Caenorhabditis elegans).